The primary structure comprises 283 residues: Bifunctional protein FolD (283 aa).

NADP(+) is bound by residues Gly163–Ser165, Ser188, and Ile229.

It belongs to the tetrahydrofolate dehydrogenase/cyclohydrolase family. As to quaternary structure, homodimer.

It carries out the reaction (6R)-5,10-methylene-5,6,7,8-tetrahydrofolate + NADP(+) = (6R)-5,10-methenyltetrahydrofolate + NADPH. It catalyses the reaction (6R)-5,10-methenyltetrahydrofolate + H2O = (6R)-10-formyltetrahydrofolate + H(+). The protein operates within one-carbon metabolism; tetrahydrofolate interconversion. Its function is as follows. Catalyzes the oxidation of 5,10-methylenetetrahydrofolate to 5,10-methenyltetrahydrofolate and then the hydrolysis of 5,10-methenyltetrahydrofolate to 10-formyltetrahydrofolate. The protein is Bifunctional protein FolD of Campylobacter concisus (strain 13826).